The chain runs to 304 residues: Glutamyl-Q tRNA(Asp) synthetase (304 aa).

L-glutamate-binding positions include 14–18 (RFAPS) and E50. A 'HIGH' region motif is present at residues 17 to 27 (PSPSGPLHFGS). Zn(2+)-binding residues include C106, C108, Y120, and C124. L-glutamate is bound by residues Y178 and R196. A 'KMSKS' region motif is present at residues 234–238 (KLSKQ). K237 serves as a coordination point for ATP.

This sequence belongs to the class-I aminoacyl-tRNA synthetase family. GluQ subfamily. Zn(2+) is required as a cofactor.

Catalyzes the tRNA-independent activation of glutamate in presence of ATP and the subsequent transfer of glutamate onto a tRNA(Asp). Glutamate is transferred on the 2-amino-5-(4,5-dihydroxy-2-cyclopenten-1-yl) moiety of the queuosine in the wobble position of the QUC anticodon. The protein is Glutamyl-Q tRNA(Asp) synthetase of Vibrio cholerae serotype O1 (strain ATCC 39315 / El Tor Inaba N16961).